Here is a 473-residue protein sequence, read N- to C-terminus: Fumarate hydratase class II (473 aa).

Residues 105–107 (SGT), 130–133 (HPND), 140–142 (SSN), and threonine 188 each bind substrate. Residue histidine 189 is the Proton donor/acceptor of the active site. Serine 319 is a catalytic residue. Residues serine 320 and 325–327 (KVN) each bind substrate.

This sequence belongs to the class-II fumarase/aspartase family. Fumarase subfamily. As to quaternary structure, homotetramer.

It localises to the cytoplasm. It carries out the reaction (S)-malate = fumarate + H2O. It participates in carbohydrate metabolism; tricarboxylic acid cycle; (S)-malate from fumarate: step 1/1. Functionally, involved in the TCA cycle. Catalyzes the stereospecific interconversion of fumarate to L-malate. The sequence is that of Fumarate hydratase class II from Xylella fastidiosa (strain 9a5c).